Reading from the N-terminus, the 199-residue chain is Acireductone dioxygenase 3 (199 aa).

Positions 99, 101, 105, and 144 each coordinate Fe(2+). His99, His101, Glu105, and His144 together coordinate Ni(2+).

The protein belongs to the acireductone dioxygenase (ARD) family. The cofactor is Fe(2+). It depends on Ni(2+) as a cofactor.

It is found in the cytoplasm. The protein resides in the nucleus. The catalysed reaction is 1,2-dihydroxy-5-(methylsulfanyl)pent-1-en-3-one + O2 = 4-methylsulfanyl-2-oxobutanoate + formate + 2 H(+). It catalyses the reaction 1,2-dihydroxy-5-(methylsulfanyl)pent-1-en-3-one + O2 = 3-(methylsulfanyl)propanoate + CO + formate + 2 H(+). The protein operates within amino-acid biosynthesis; L-methionine biosynthesis via salvage pathway; L-methionine from S-methyl-5-thio-alpha-D-ribose 1-phosphate: step 5/6. In terms of biological role, catalyzes 2 different reactions between oxygen and the acireductone 1,2-dihydroxy-3-keto-5-methylthiopentene (DHK-MTPene) depending upon the metal bound in the active site. Fe-containing acireductone dioxygenase (Fe-ARD) produces formate and 2-keto-4-methylthiobutyrate (KMTB), the alpha-ketoacid precursor of methionine in the methionine recycle pathway. Ni-containing acireductone dioxygenase (Ni-ARD) produces methylthiopropionate, carbon monoxide and formate, and does not lie on the methionine recycle pathway. The protein is Acireductone dioxygenase 3 (ARD3) of Arabidopsis thaliana (Mouse-ear cress).